The following is a 1050-amino-acid chain: MHQPPESTAAAAAAADISARKMAHPAMFPRRGSGGGSASALSAAGTGVSGAAPSSEDFPPPSSLLQPPPPAASSTQGPQPPPPQSLNLLSQAQLQGQPLAPGGTQMKKKSGFQITSVTPAQISASISSNNSIAEDTESYDDLDESHTEDLSSSEILDVSLSRATDLGEPERSSSEETLNNFQEAETPGAVSPNQPHLPQPHLPHLPQQNVVINGNAHPHHLHHHHHIHHGHHLHHGHHHSSHAAVASTSVPGGPPPTSPVSRKLSTAGSSDGGVPVPPTSAVSSAGLPASVMTSIRAPSTPGSIGVNSVTGTNATNNVNIAAVGGFSPGVANSVHPNAVSISGGPGVTSGVNVNVLSGMGNGTISSPVLNAAAGITVGVVSSQQQQPQQPPPTVNTSRFRVVKLDSTSEPFKKGRWTCTEFYERENAVPGPEGVAINKVVETVKQTPTEASSSERESTSGSSVSSSVSTLSHYTESVGSGEMGAPTVVVQQQQPLPPAPPGLQGVALQQLDFSSPGPQSISQSQMSQVQLQPQELSFQQKPNLQPVPLQATMSAATGIQPSPVNVVGVTSAVGQQPSISSLAQPQLPYPQPAPPVQTPLPGAPPQQLQYGQQQPMVPTQIAPGHGQPATQNPPSEYAQQQPIFQAAMSSGQSSSTGTGASVIPVAQPQGIQLPVQPTAVQAQPAGATGQPIGQAPTAVSTVPAGGQIASIGQQANIPTAVQPPSTQVTPSVVQQGAPPSSQVVLPAPTGIIHQGVQTSAPSLPQQLVIAPQSTMVAVPPQTQGVEAVAHGVVSHQLPTGSPLPSASTISVTSQVSSAGPSGMSSVPTNLVPPQNIAQPPATQNGSLVQSVSQSPLIATNINLPLAQQIPLSSTQFSTQSLAQAIGSQMEDTRRPAEPSSGGLPQTLSGDSGGVSAVSDGSSSSLAASASLFPLKVLPLTTPLVDGEDESSGASVVAIDNKIEQAMDLVKSHLMYAVREEVEVLKEQIKELIEKNSQLEQENNLLKTLASPEQLAQFQAQLQTGSPPATTQPQGTTQPPAQPASQGSGSTA.

The interval 1–99 (MHQPPESTAA…SQAQLQGQPL (99 aa)) is required for interaction with TGFBR1 and promotion of TGF-beta signaling. Disordered regions lie at residues 22–111 (MAHP…KKSG), 126–285 (ISSN…VSSA), 445–479 (QTPT…SVGS), 511–531 (DFSS…VQLQ), 581–609 (LAQP…QLQY), 720–740 (VQPP…PPSS), 795–847 (QLPT…GSLV), and 879–919 (SLAQ…VSDG). Low complexity predominate over residues 38-55 (ASALSAAGTGVSGAAPSS). Residues 58–71 (FPPPSSLLQPPPPA) show a composition bias toward pro residues. A compositionally biased stretch (low complexity) spans 85-97 (SLNLLSQAQLQGQ). Positions 134-143 (EDTESYDDLD) are enriched in acidic residues. Residues 217–241 (HPHHLHHHHHIHHGHHLHHGHHHSS) are compositionally biased toward basic residues. Ser265 is subject to Phosphoserine. Residues 458 to 476 (TSGSSVSSSVSTLSHYTES) are compositionally biased toward low complexity. The segment covering 586–603 (LPYPQPAPPVQTPLPGAP) has biased composition (pro residues). A compositionally biased stretch (low complexity) spans 906 to 919 (LSGDSGGVSAVSDG). The interval 983-1004 (LKEQIKELIEKNSQLEQENNLL) is leucine-zipper. The disordered stretch occupies residues 1015–1050 (QFQAQLQTGSPPATTQPQGTTQPPAQPASQGSGSTA). Low complexity predominate over residues 1021 to 1050 (QTGSPPATTQPQGTTQPPAQPASQGSGSTA).

The protein belongs to the TSC-22/Dip/Bun family. Forms homodimers. Forms heterodimers. Component of a complex composed of TSC22D1 (via N-terminus), TGFBR1 and TGFBR2; the interaction between TSC22D1 and TGFBR1 is inhibited by SMAD7 and promoted by TGFB1. Interacts with SMAD7; the interaction requires TGF-beta and the interaction is inhibited by TGFBR1. Interacts with TPT1/fortilin; interaction results in the destabilization of TSC22D1 protein and prevents TSC22D1-mediated apoptosis. Interacts with SMAD4 (via N-terminus). Interacts with ACVRL1/ALK1, ACVR1/ALK2, BMPR1A/ALK3, ACVR1B/ALK4, BMPR1B/ALK6, ACVR2A/ACTRII, and BMPR2. Interacts with SMAD6. Interacts with TFE3; the interaction is enhanced in the presence of TGF-beta. As to quaternary structure, forms a heterodimer with TSC22D4/THG1. In terms of assembly, forms a heterodimer with TSC22D4/THG1. Interacts with histone H1-2. Interacts with GNL3. As to expression, ubiquitously expressed, abundantly expressed in testis, ovary, uterus, and lung. Expressed in cardiomyocytes.

Its subcellular location is the cytoplasm. The protein resides in the nucleus. The protein localises to the cell membrane. It localises to the mitochondrion. Functionally, transcriptional repressor. Acts on the C-type natriuretic peptide (CNP) promoter. Acts to promote CASP3-mediated apoptosis. Positively regulates TGF-beta signaling by interacting with SMAD7 which inhibits binding of SMAD7 to TGFBR1, preventing recruitment of SMURF ubiquitin ligases to TGFBR1 and inhibiting SMURF-mediated ubiquitination and degradation of TGFBR1. Contributes to enhancement of TGF-beta signaling by binding to and modulating the transcription activator activity of SMAD4. Promotes TGF-beta-induced transcription of COL1A2; via its interaction with TFE3 at E-boxes in the gene proximal promoter. Plays a role in the repression of hematopoietic precursor cell growth. Promotes IL2 deprivation-induced apoptosis in T-lymphocytes, via repression of TSC22D3/GILZ transcription and activation of the caspase cascade. May act to negatively regulate TGFB3 signaling and thereby inhibit cell death in mammary gland cells. Its function is as follows. Positively regulates cell death in response to TGFB3 during mammary gland involution. The sequence is that of TSC22 domain family protein 1 from Rattus norvegicus (Rat).